We begin with the raw amino-acid sequence, 320 residues long: D-alanine--D-alanine ligase (320 aa).

An ATP-grasp domain is found at 104 to 308 (KRVCLSHGVP…YEDLCVEILR (205 aa)). 134-189 (AAEFGMPLMLKAPHEGSTIGIAKVETAEGMQAGFDLCAKYDDVVLVEQFVKGRELT) lines the ATP pocket. Mg(2+) is bound by residues D261, E275, and N277.

Belongs to the D-alanine--D-alanine ligase family. The cofactor is Mg(2+). Mn(2+) is required as a cofactor.

Its subcellular location is the cytoplasm. The catalysed reaction is 2 D-alanine + ATP = D-alanyl-D-alanine + ADP + phosphate + H(+). It functions in the pathway cell wall biogenesis; peptidoglycan biosynthesis. Functionally, cell wall formation. The protein is D-alanine--D-alanine ligase of Janthinobacterium sp. (strain Marseille) (Minibacterium massiliensis).